Here is a 301-residue protein sequence, read N- to C-terminus: Glycosyltransferase GlyG (301 aa).

Belongs to the glycosyltransferase 2 family.

The protein operates within protein modification; protein glycosylation. Functionally, involved in the polymorphic O-glycosylation of the serine-rich repeat protein PsrP. Catalyzes the third step in glycosylation PsrP in this bacteria. Transfers glucose from UDP-glucose to the terminal glucose moiety of already-glycosylated PsrP (using truncated substrates with PsrP SSR1-GlcNAc-Glc). Has a marked preference for PsrP substrate that has already been modified by GlcNAc and glucose. In vitro has hydrolytic activity against UDP-glucose and to a lesser extent against UDP-galactose. Its function is as follows. Also catalyzes the fourth step in glycosylation of the serine-rich repeat protein PsrP in this bacteria. Can transfer the sugar from UDP-glucose (and much less well from UDP-galactose) to the terminal sugar moiety of PsrP-GlcNAc-Glc-Gal or of PsrP-GlcNAc-Glc-Glc. This Streptococcus pneumoniae serotype 4 (strain ATCC BAA-334 / TIGR4) protein is Glycosyltransferase GlyG.